We begin with the raw amino-acid sequence, 197 residues long: Putative carbonic anhydrase YvdA (197 aa).

Positions 41, 43, 99, and 102 each coordinate Zn(2+).

It belongs to the beta-class carbonic anhydrase family. Zn(2+) serves as cofactor.

It catalyses the reaction hydrogencarbonate + H(+) = CO2 + H2O. Its function is as follows. Reversible hydration of carbon dioxide. The polypeptide is Putative carbonic anhydrase YvdA (yvdA) (Bacillus subtilis (strain 168)).